The following is a 414-amino-acid chain: Serine/threonine transporter SstT (414 aa).

The next 8 helical transmembrane spans lie at G16–S36, L46–V66, I84–F104, A143–L163, A180–V200, L219–F239, M300–V320, and V332–I352.

This sequence belongs to the dicarboxylate/amino acid:cation symporter (DAACS) (TC 2.A.23) family.

It is found in the cell inner membrane. The enzyme catalyses L-serine(in) + Na(+)(in) = L-serine(out) + Na(+)(out). The catalysed reaction is L-threonine(in) + Na(+)(in) = L-threonine(out) + Na(+)(out). Involved in the import of serine and threonine into the cell, with the concomitant import of sodium (symport system). The chain is Serine/threonine transporter SstT from Salmonella agona (strain SL483).